The primary structure comprises 505 residues: Trans-cinnamate 4-monooxygenase (505 aa).

Residues 3 to 23 (LLLLEKTLLGLFIAAITAIAI) form a helical membrane-spanning segment. (E)-cinnamate contacts are provided by residues 213–218 (RSRLAQ) and Ala306. A heme-binding site is contributed by Cys447.

It belongs to the cytochrome P450 family. It depends on heme as a cofactor.

Its subcellular location is the membrane. It carries out the reaction (E)-cinnamate + reduced [NADPH--hemoprotein reductase] + O2 = (E)-4-coumarate + oxidized [NADPH--hemoprotein reductase] + H2O + H(+). Its pathway is phenylpropanoid metabolism; trans-4-coumarate biosynthesis; trans-4-coumarate from trans-cinnamate: step 1/1. Its function is as follows. Catalyzes the first oxidative step of the phenylpropanoid pathway in higher plants by transforming trans-cinnamate into p-coumarate. The compounds formed by this pathway are essential components for lignification, pollination, and defense against ultraviolet light, predators and pathogens. This Glycyrrhiza echinata (Licorice) protein is Trans-cinnamate 4-monooxygenase (CYP73A14).